A 194-amino-acid chain; its full sequence is Thiol:disulfide interchange protein CycY (194 aa).

An N-terminal signal peptide occupies residues Met1 to Ser37. Residues Ala46–Glu190 form the Thioredoxin domain. An intrachain disulfide couples Cys92 to Cys95.

It belongs to the thioredoxin family. DsbE subfamily.

The protein localises to the periplasm. Required for disulfide bond formation in some periplasmic proteins. Also acts as a disulfide oxidoreductase in cytochromes c biogenesis. The cysteines of apocytochromes c must be in the reduced state for covalent linkage between the two moieties to occur. The protein is Thiol:disulfide interchange protein CycY (cycY) of Bradyrhizobium diazoefficiens (strain JCM 10833 / BCRC 13528 / IAM 13628 / NBRC 14792 / USDA 110).